Here is a 416-residue protein sequence, read N- to C-terminus: Tyrosine--tRNA ligase (416 aa).

Y40 is an L-tyrosine binding site. A 'HIGH' region motif is present at residues 45-54; the sequence is ATAKSLHVGS. Y177 and Q181 together coordinate L-tyrosine. A 'KMSKS' region motif is present at residues 237-241; the sequence is KMGKS. K240 contacts ATP. The 65-residue stretch at 351-415 folds into the S4 RNA-binding domain; the sequence is ISIVQLIVKS…GKKRHAMVQL (65 aa).

Belongs to the class-I aminoacyl-tRNA synthetase family. TyrS type 1 subfamily. As to quaternary structure, homodimer.

The protein localises to the cytoplasm. It carries out the reaction tRNA(Tyr) + L-tyrosine + ATP = L-tyrosyl-tRNA(Tyr) + AMP + diphosphate + H(+). Its function is as follows. Catalyzes the attachment of tyrosine to tRNA(Tyr) in a two-step reaction: tyrosine is first activated by ATP to form Tyr-AMP and then transferred to the acceptor end of tRNA(Tyr). The sequence is that of Tyrosine--tRNA ligase from Roseobacter denitrificans (strain ATCC 33942 / OCh 114) (Erythrobacter sp. (strain OCh 114)).